Here is a 204-residue protein sequence, read N- to C-terminus: 3-isopropylmalate dehydratase small subunit (204 aa).

Belongs to the LeuD family. LeuD type 1 subfamily. Heterodimer of LeuC and LeuD.

The catalysed reaction is (2R,3S)-3-isopropylmalate = (2S)-2-isopropylmalate. The protein operates within amino-acid biosynthesis; L-leucine biosynthesis; L-leucine from 3-methyl-2-oxobutanoate: step 2/4. In terms of biological role, catalyzes the isomerization between 2-isopropylmalate and 3-isopropylmalate, via the formation of 2-isopropylmaleate. This is 3-isopropylmalate dehydratase small subunit from Psychromonas ingrahamii (strain DSM 17664 / CCUG 51855 / 37).